The following is a 338-amino-acid chain: DNA-directed RNA polymerase subunit alpha (338 aa).

The tract at residues 1-233 is alpha N-terminal domain (alpha-NTD); it reads MYKNWRELIK…EQLQIFINFD (233 aa). The alpha C-terminal domain (alpha-CTD) stretch occupies residues 250 to 338; sequence INENLYRSVE…KMIQEGKEDL (89 aa).

It belongs to the RNA polymerase alpha chain family. In terms of assembly, homodimer. The RNAP catalytic core consists of 2 alpha, 1 beta, 1 beta' and 1 omega subunit. When a sigma factor is associated with the core the holoenzyme is formed, which can initiate transcription.

It catalyses the reaction RNA(n) + a ribonucleoside 5'-triphosphate = RNA(n+1) + diphosphate. Its function is as follows. DNA-dependent RNA polymerase catalyzes the transcription of DNA into RNA using the four ribonucleoside triphosphates as substrates. The polypeptide is DNA-directed RNA polymerase subunit alpha (Syntrophotalea carbinolica (strain DSM 2380 / NBRC 103641 / GraBd1) (Pelobacter carbinolicus)).